We begin with the raw amino-acid sequence, 575 residues long: Thrombomodulin (575 aa).

An N-terminal signal peptide occupies residues 1–18 (MLGVLVLGALALAGLGFP). Residues 19 to 515 (APAEPQPGGS…TPPAVGLVHS (497 aa)) are Extracellular-facing. Residues 31-169 (VEHDCFALYP…VKADGFLCEF (139 aa)) enclose the C-type lectin domain. N-linked (GlcNAc...) asparagine glycans are attached at residues Asn47, Asn115, and Asn116. Cystine bridges form between Cys137–Cys158, Cys245–Cys256, Cys252–Cys265, Cys267–Cys280, Cys288–Cys296, Cys292–Cys308, Cys310–Cys323, Cys329–Cys340, Cys336–Cys349, Cys351–Cys362, Cys369–Cys378, Cys374–Cys388, Cys390–Cys404, Cys408–Cys413, Cys417–Cys425, Cys427–Cys439, Cys445–Cys455, Cys451–Cys464, and Cys466–Cys480. EGF-like domains are found at residues 241–281 (GAWD…RSCT) and 284–324 (ATQS…HRCE). Residues 325 to 363 (DVDDCILEPSPCPQRCVNTQGGFECHCYPNYDLVDGECV) form the EGF-like 3; calcium-binding domain. The residue at position 342 (Asn342) is a (3R)-3-hydroxyasparagine. 2 EGF-like domains span residues 365–405 (PVDP…HRCQ) and 404–440 (CQMF…FICT). N-linked (GlcNAc...) asparagine glycosylation occurs at Asn382. Asn409 carries an N-linked (GlcNAc...) asparagine glycan. An EGF-like 6; calcium-binding domain is found at 441–481 (DIDECENGGFCSGVCHNLPGTFECICGPDSALARHIGTDCD). Positions 481–515 (DSGKVDGGDSGSGEPPPSPTPGSTLTPPAVGLVHS) are involved in alpha-L/beta-2 and alpha-M/beta-2 integrin binding. The interval 484–506 (KVDGGDSGSGEPPPSPTPGSTLT) is disordered. 2 O-linked (Xyl...) (chondroitin sulfate) serine glycosylation sites follow: Ser490 and Ser492. Residues 516-539 (GLLIGISIASLCLVVALLALLCHL) form a helical membrane-spanning segment. Residues 540 to 575 (RKKQGAARAKMEYKCAAPSKEVVLQHVRTERTPQRL) are Cytoplasmic-facing.

As to quaternary structure, interacts with ITGAL, ITGAM and ITGB2. Interacts with thrombin/F2; this interaction switches the specificity of thrombin from a procoagulant to an anticoagulant and antifibrinolytic protease. Interacts with ANGP1 and ANGP2; these interactions significantly inhibit the generation of activated PC and TAFIa/CPB2 by the thrombin/thrombomodulin complex. Interacts with PF4; this interaction enhances generation of activated protein C. Interacts with HMGB1; this interaction inhibits HMGB1 inflammatory activity. Post-translationally, N-glycosylated. The iron and 2-oxoglutarate dependent 3-hydroxylation of aspartate and asparagine is (R) stereospecific within EGF domains. In terms of tissue distribution, endothelial cells are unique in synthesizing thrombomodulin.

It is found in the membrane. Functionally, endothelial cell receptor that plays a critical role in regulating several physiological processes including hemostasis, coagulation, fibrinolysis, inflammation, and angiogenesis. Acts as a cofactor for thrombin activation of protein C/PROC on the surface of vascular endothelial cells leading to initiation of the activated protein C anticoagulant pathway. Also accelerates the activation of the plasma carboxypeptidase B2/CPB2, which catalyzes removal of C-terminal basic amino acids from its substrates including kinins or anaphylatoxins leading to fibrinolysis inhibition. Plays critical protective roles in changing the cleavage specificity of protease-activated receptor 1/PAR1, inhibiting endothelial cell permeability and inflammation. Suppresses inflammation distinctly from its anticoagulant cofactor activity by sequestering HMGB1 thereby preventing it from engaging cellular receptors such as RAGE and contributing to the inflammatory response. The sequence is that of Thrombomodulin (THBD) from Homo sapiens (Human).